Reading from the N-terminus, the 266-residue chain is Undecaprenyl-diphosphatase 1 (266 aa).

The next 8 membrane-spanning stretches (helical) occupy residues 1 to 21, 39 to 59, 87 to 107, 114 to 134, 149 to 169, 183 to 203, 218 to 238, and 246 to 266; these read MDTF…FLPI, QGLS…VIYF, WWII…KDFI, TGVI…ADKM, ALLI…RSGA, AAAR…AILV, ALTL…HYFL, and MTPF…FIFL.

It belongs to the UppP family.

The protein resides in the cell inner membrane. It catalyses the reaction di-trans,octa-cis-undecaprenyl diphosphate + H2O = di-trans,octa-cis-undecaprenyl phosphate + phosphate + H(+). Functionally, catalyzes the dephosphorylation of undecaprenyl diphosphate (UPP). Confers resistance to bacitracin. The chain is Undecaprenyl-diphosphatase 1 from Shewanella oneidensis (strain ATCC 700550 / JCM 31522 / CIP 106686 / LMG 19005 / NCIMB 14063 / MR-1).